The chain runs to 168 residues: Ribosome maturation factor RimM (168 aa).

The 73-residue stretch at 96 to 168 (VDEYYWGDLI…TIRVDWQKDW (73 aa)) folds into the PRC barrel domain.

This sequence belongs to the RimM family. As to quaternary structure, binds ribosomal protein uS19.

The protein localises to the cytoplasm. Functionally, an accessory protein needed during the final step in the assembly of 30S ribosomal subunit, possibly for assembly of the head region. Essential for efficient processing of 16S rRNA. May be needed both before and after RbfA during the maturation of 16S rRNA. It has affinity for free ribosomal 30S subunits but not for 70S ribosomes. This Aromatoleum aromaticum (strain DSM 19018 / LMG 30748 / EbN1) (Azoarcus sp. (strain EbN1)) protein is Ribosome maturation factor RimM.